Reading from the N-terminus, the 429-residue chain is Tubby-like F-box protein 5 (429 aa).

An F-box domain is found at 53–108 (TRWANLPAALLRDVMKKLDESESTWPARKQVVACAGVCKTWRLMCKDIVKSPEFSG). A disordered region spans residues 360-385 (QPGSGSDGGALATRPSLSPQQPEQSN). Residues 374–383 (PSLSPQQPEQ) show a composition bias toward polar residues.

This sequence belongs to the TUB family. As to expression, mostly expressed in roots, flowers and siliques.

The sequence is that of Tubby-like F-box protein 5 from Arabidopsis thaliana (Mouse-ear cress).